Reading from the N-terminus, the 593-residue chain is ABC transporter F family member 2 (593 aa).

Positions 1-10 (MAKKGGKNNK) are enriched in basic residues. Residues 1–25 (MAKKGGKNNKSKKEVTPPTSDVEDE) form a disordered region. 2 consecutive ABC transporter domains span residues 53–294 (VKIE…VNQM) and 364–583 (MHFD…RDLT). ATP is bound by residues 85 to 92 (GQNGCGKS) and 399 to 406 (GPNGAGKS).

The protein belongs to the ABC transporter superfamily. ABCF family. EF3 subfamily.

This chain is ABC transporter F family member 2 (abcF2), found in Dictyostelium discoideum (Social amoeba).